Reading from the N-terminus, the 952-residue chain is Protocadherin-20 (952 aa).

The first 60 residues, 1 to 60 (MRGRGNARSLLVQAVSLRPATWHPCLDMGHLHRPSSRTSHRNLPHVFLLFLFVGPFNCLA), serve as a signal peptide directing secretion. Topologically, residues 61–891 (SYSRATELLY…VESMSCMPTL (831 aa)) are extracellular. Cadherin domains follow at residues 64 to 210 (RATE…APQF), 211 to 321 (PISE…CPLF), 322 to 536 (IDSQ…APVF), 537 to 640 (LQPL…SPRF), 641 to 743 (INKD…PPLV), and 747 to 864 (QSNM…EPEI). N-linked (GlcNAc...) asparagine glycosylation occurs at asparagine 135. Asparagine 327 and asparagine 333 each carry an N-linked (GlcNAc...) asparagine glycan. 5 N-linked (GlcNAc...) asparagine glycosylation sites follow: asparagine 681, asparagine 749, asparagine 804, asparagine 845, and asparagine 850. Residues 892–912 (VALSVISLGSITLVTGMGIYI) traverse the membrane as a helical segment. Topologically, residues 913 to 952 (CLRKGKKHHREDDNLEVQIPLKGKIDLCMRERKPVDISNI) are cytoplasmic.

It is found in the cell membrane. Its function is as follows. Potential calcium-dependent cell-adhesion protein. This chain is Protocadherin-20 (Pcdh20), found in Mus musculus (Mouse).